The sequence spans 432 residues: Trigger factor (432 aa).

The PPIase FKBP-type domain maps to 161–246; the sequence is GSRATIDFVG…LNKVEARELP (86 aa).

The protein belongs to the FKBP-type PPIase family. Tig subfamily.

It is found in the cytoplasm. The enzyme catalyses [protein]-peptidylproline (omega=180) = [protein]-peptidylproline (omega=0). Involved in protein export. Acts as a chaperone by maintaining the newly synthesized protein in an open conformation. Functions as a peptidyl-prolyl cis-trans isomerase. The chain is Trigger factor from Vibrio atlanticus (strain LGP32) (Vibrio splendidus (strain Mel32)).